We begin with the raw amino-acid sequence, 115 residues long: Large ribosomal subunit protein uL18 (115 aa).

This sequence belongs to the universal ribosomal protein uL18 family. In terms of assembly, part of the 50S ribosomal subunit; part of the 5S rRNA/L5/L18/L25 subcomplex. Contacts the 5S and 23S rRNAs.

Its function is as follows. This is one of the proteins that bind and probably mediate the attachment of the 5S RNA into the large ribosomal subunit, where it forms part of the central protuberance. This chain is Large ribosomal subunit protein uL18, found in Marinobacter nauticus (strain ATCC 700491 / DSM 11845 / VT8) (Marinobacter aquaeolei).